A 408-amino-acid chain; its full sequence is Zinc-regulated transporter 1 (408 aa).

3 helical membrane passes run 64 to 84, 101 to 121, and 141 to 161; these read IGAIFVILATSLIGMNLPLVL, LFARYFGSGVILATAFIHLLA, and WAPGICLISCWFILLLEVLLN. T234 and T237 each carry phosphothreonine. 5 helical membrane passes run 254 to 274, 279 to 299, 315 to 335, 351 to 371, and 387 to 407; these read FIILESSIILHSVIIGLTTAV, FKTLFPVIIFHQAFEGCGLGS, WVLGVIYSLVTPIGMAAGLGV, GVLDAISSGILVYAGLVELLA, and LIYLLACSMAGTGVMALLGKW.

It belongs to the ZIP transporter (TC 2.A.5) family.

The protein resides in the endoplasmic reticulum membrane. Functionally, high-affinity zinc transport protein. Regulates intracellular zinc levels. The protein is Zinc-regulated transporter 1 (zrt1) of Schizosaccharomyces pombe (strain 972 / ATCC 24843) (Fission yeast).